The primary structure comprises 373 residues: Peptidoglycan recognition protein 4 (373 aa).

The signal sequence occupies residues 1–17 (MLPWLLVFSALGIQAWG). N-linked (GlcNAc...) asparagine glycosylation is found at Asn-22, Asn-39, Asn-109, Asn-145, and Asn-247. N-acetylmuramoyl-L-alanine amidase domains are found at residues 74–212 (TPVN…ACPG) and 235–358 (YGII…LSPG). Disulfide bonds link Cys-210–Cys-332, Cys-226–Cys-270, and Cys-246–Cys-252. Peptidoglycan-binding residues include Tyr-263 and Tyr-274. Interaction with murein regions lie at residues 293–302 (QGSSTPGYDD) and 353–354 (RT).

This sequence belongs to the N-acetylmuramoyl-L-alanine amidase 2 family. As to quaternary structure, homodimer; disulfide-linked. Heterodimer with PGLYRP3; disulfide-linked. In terms of processing, N-glycosylated. Detected in skin epidermis, eccrine sweat glands and ducts, mucous cells in the submandibular salivary gland, mucous cells in the throat, ciliary body epithelial cells of the eye, small intestine, colon, stomach and in mature epithelial cells of the tongue (at protein level). High expression in skin and esophagus. Expressed also to a much lesser extent in the tonsils and thymus.

The protein localises to the secreted. Its function is as follows. Pattern receptor that binds to murein peptidoglycans (PGN) of Gram-positive bacteria. Has bactericidal activity towards Gram-positive bacteria. May kill Gram-positive bacteria by interfering with peptidoglycan biosynthesis. Also binds to Gram-negative bacteria, and has bacteriostatic activity towards Gram-negative bacteria. Plays a role in innate immunity. The polypeptide is Peptidoglycan recognition protein 4 (PGLYRP4) (Homo sapiens (Human)).